Consider the following 87-residue polypeptide: U15-lycotoxin-Ls1h (87 aa).

A signal peptide spans 1 to 20 (MNSKIFAVLLLLGLLSCVLS). The 46-residue stretch at 21–66 (DQYCPKSSITACKKMNTRNDCCKDDDCTGGSWCCATPCGNFCKYPT) folds into the WAP domain. Cystine bridges form between Cys24-Cys54, Cys32-Cys58, Cys41-Cys53, Cys42-Cys80, and Cys47-Cys62.

It belongs to the venom protein 11 family. 01 (wap-1) subfamily. Post-translationally, contains 5 disulfide bonds. As to expression, expressed by the venom gland.

The protein localises to the secreted. Its function is as follows. Has antibacterial activity. This Lycosa singoriensis (Wolf spider) protein is U15-lycotoxin-Ls1h.